The chain runs to 285 residues: D-apionate oxidoisomerase (285 aa).

NAD(+) contacts are provided by residues 15–17, Glu36, and Asp71; that span reads GKM. Positions 116 and 186 each coordinate Zn(2+).

Belongs to the ApnO family. The cofactor is Zn(2+).

It carries out the reaction D-apionate + NAD(+) = 3-oxoisoapionate + NADH + H(+). The protein operates within carbohydrate metabolism. In terms of biological role, involved in catabolism of D-apiose. Catalyzes the conversion of D-apionate to 3-oxo-isoapionate. The chain is D-apionate oxidoisomerase from Pectobacterium atrosepticum (strain SCRI 1043 / ATCC BAA-672) (Erwinia carotovora subsp. atroseptica).